The sequence spans 144 residues: Granulocyte-macrophage colony-stimulating factor (144 aa).

A signal peptide spans 1–17; it reads MWLQNLLLLGTVVCSIS. O-linked (GalNAc...) serine glycosylation is present at Ser-24. The O-linked (GalNAc...) threonine glycan is linked to Thr-27. Residues Asn-44, Asn-47, and Asn-54 are each glycosylated (N-linked (GlcNAc...) asparagine). 2 disulfide bridges follow: Cys-71–Cys-113 and Cys-105–Cys-138.

It belongs to the GM-CSF family. Monomer. The signaling GM-CSF receptor complex is a dodecamer of two head-to-head hexamers of two alpha, two beta, and two ligand subunits.

It is found in the secreted. In terms of biological role, cytokine that stimulates the growth and differentiation of hematopoietic precursor cells from various lineages, including granulocytes, macrophages, eosinophils and erythrocytes. The chain is Granulocyte-macrophage colony-stimulating factor (CSF2) from Sus scrofa (Pig).